A 308-amino-acid chain; its full sequence is Aspartate carbamoyltransferase catalytic subunit (308 aa).

Carbamoyl phosphate-binding residues include R58 and T59. K86 provides a ligand contact to L-aspartate. Residues R108, H136, and Q139 each coordinate carbamoyl phosphate. Residues R169 and R227 each coordinate L-aspartate. Residues G268 and P269 each contribute to the carbamoyl phosphate site.

This sequence belongs to the aspartate/ornithine carbamoyltransferase superfamily. ATCase family. In terms of assembly, heterododecamer (2C3:3R2) of six catalytic PyrB chains organized as two trimers (C3), and six regulatory PyrI chains organized as three dimers (R2).

The catalysed reaction is carbamoyl phosphate + L-aspartate = N-carbamoyl-L-aspartate + phosphate + H(+). It functions in the pathway pyrimidine metabolism; UMP biosynthesis via de novo pathway; (S)-dihydroorotate from bicarbonate: step 2/3. In terms of biological role, catalyzes the condensation of carbamoyl phosphate and aspartate to form carbamoyl aspartate and inorganic phosphate, the committed step in the de novo pyrimidine nucleotide biosynthesis pathway. In Chloroflexus aurantiacus (strain ATCC 29366 / DSM 635 / J-10-fl), this protein is Aspartate carbamoyltransferase catalytic subunit.